The chain runs to 391 residues: PPE family protein PPE18 (391 aa).

This sequence belongs to the mycobacterial PPE family. In terms of assembly, interacts with human TLR2.

Its subcellular location is the secreted. The protein localises to the cell wall. It is found in the cell surface. Its function is as follows. Could be a crucial virulence factor for intracellular survival of M.tuberculosis. Favors development of Th2-type response, and down-regulates the pro-inflammatory and Th1-type response. Specifically interacts with the human Toll-like receptor 2 (TLR2), leading to an early and sustained activation of p38 MAPK, which induces IL-10 production and activates Th2-type immune response. Also inhibits pro-inflammatory cytokines IL-12p40 and TNF-alpha production. Acts by up-regulating the expression as well as tyrosine phosphorylation of suppressor of cytokine signaling 3 (SOCS-3), leading to the inhibition of phosphorylation of I-kappa-B-alpha, thereby preventing nuclear translocation of the NF-kappa-B/REL subunits and expression of NF-kappa-B regulated genes like IL-12 and TNF-alpha. Induction of SOCS-3 probably depends on the activation of p38 MAPK. This is PPE family protein PPE18 from Mycobacterium tuberculosis (strain ATCC 25618 / H37Rv).